We begin with the raw amino-acid sequence, 181 residues long: Large ribosomal subunit protein uL6 (181 aa).

It belongs to the universal ribosomal protein uL6 family. As to quaternary structure, part of the 50S ribosomal subunit.

Functionally, this protein binds to the 23S rRNA, and is important in its secondary structure. It is located near the subunit interface in the base of the L7/L12 stalk, and near the tRNA binding site of the peptidyltransferase center. The chain is Large ribosomal subunit protein uL6 from Hydrogenobaculum sp. (strain Y04AAS1).